A 460-amino-acid polypeptide reads, in one-letter code: A-type ATP synthase subunit B (460 aa).

This sequence belongs to the ATPase alpha/beta chains family. Has multiple subunits with at least A(3), B(3), C, D, E, F, H, I and proteolipid K(x).

It is found in the cell membrane. Functionally, component of the A-type ATP synthase that produces ATP from ADP in the presence of a proton gradient across the membrane. The B chain is a regulatory subunit. The chain is A-type ATP synthase subunit B from Thermofilum pendens (strain DSM 2475 / Hrk 5).